We begin with the raw amino-acid sequence, 1357 residues long: DNA-directed RNA polymerase subunit beta (1357 aa).

The protein belongs to the RNA polymerase beta chain family. As to quaternary structure, the RNAP catalytic core consists of 2 alpha, 1 beta, 1 beta' and 1 omega subunit. When a sigma factor is associated with the core the holoenzyme is formed, which can initiate transcription.

The enzyme catalyses RNA(n) + a ribonucleoside 5'-triphosphate = RNA(n+1) + diphosphate. DNA-dependent RNA polymerase catalyzes the transcription of DNA into RNA using the four ribonucleoside triphosphates as substrates. The sequence is that of DNA-directed RNA polymerase subunit beta from Pseudomonas fluorescens (strain Pf0-1).